The following is a 1059-amino-acid chain: Endo-1,4-beta-xylanase A (1059 aa).

A signal peptide spans 1–30 (MQVRKRRGLLDVSTAVLVGILAGFLGVVLA). An A-1 region spans residues 47–199 (SSLETVLALS…LDKVQVLAPK (153 aa)). The tract at residues 200–354 (ESGPKVIYET…DDVKIVDTTS (155 aa)) is A-2. Residues 364-692 (EKEIPALKEV…KLAYWAIVAP (329 aa)) form the GH10 domain. Glu-502 serves as the catalytic Proton donor. Residue Glu-608 is the Nucleophile of the active site. CBM-cenC domains are found at residues 700–870 (KESR…LEGI) and 871–1059 (MVAT…RLIK).

It belongs to the glycosyl hydrolase 10 (cellulase F) family.

The catalysed reaction is Endohydrolysis of (1-&gt;4)-beta-D-xylosidic linkages in xylans.. The sequence is that of Endo-1,4-beta-xylanase A (xynA) from Thermotoga maritima (strain ATCC 43589 / DSM 3109 / JCM 10099 / NBRC 100826 / MSB8).